Reading from the N-terminus, the 193-residue chain is Large ribosomal subunit protein eL19A (193 aa).

A disordered region spans residues 156–179 (QEQQDARRARAKAARQRRAKAVEE). Residues 164–174 (ARAKAARQRRA) are compositionally biased toward basic residues.

It belongs to the eukaryotic ribosomal protein eL19 family. Component of the large ribosomal subunit (LSU). Mature yeast ribosomes consist of a small (40S) and a large (60S) subunit. The 40S small subunit contains 1 molecule of ribosomal RNA (18S rRNA) and at least 33 different proteins. The large 60S subunit contains 3 rRNA molecules (25S, 5.8S and 5S rRNA) and at least 46 different proteins. eL19 lies in close proximity to the binding site for eukaryotic initiation factor eIF4G.

It is found in the cytoplasm. Its function is as follows. Component of the ribosome, a large ribonucleoprotein complex responsible for the synthesis of proteins in the cell. The small ribosomal subunit (SSU) binds messenger RNAs (mRNAs) and translates the encoded message by selecting cognate aminoacyl-transfer RNA (tRNA) molecules. The large subunit (LSU) contains the ribosomal catalytic site termed the peptidyl transferase center (PTC), which catalyzes the formation of peptide bonds, thereby polymerizing the amino acids delivered by tRNAs into a polypeptide chain. The nascent polypeptides leave the ribosome through a tunnel in the LSU and interact with protein factors that function in enzymatic processing, targeting, and the membrane insertion of nascent chains at the exit of the ribosomal tunnel. eL19 may play a role in the last stages of translation initiation, in particular subunit joining and shedding/releasing factors. The polypeptide is Large ribosomal subunit protein eL19A (rpl1901) (Schizosaccharomyces pombe (strain 972 / ATCC 24843) (Fission yeast)).